Reading from the N-terminus, the 34-residue chain is Potassium channel toxin alpha-KTx 6 hetlaxin (34 aa).

Disulfide bonds link C3–C24, C9–C29, C13–C31, and C19–C34. C34 is subject to Cysteine amide.

Contains 4 disulfide bonds. In terms of tissue distribution, expressed by the venom gland.

It localises to the secreted. Its function is as follows. Binds to voltage-gated potassium channels Kv1.3/KCNA3 (IC(50)=0.48 uM) and Kv1.1/KCNA1 (IC(50)=6.7 uM) and inhibits channel activity. The sequence is that of Potassium channel toxin alpha-KTx 6 hetlaxin from Heterometrus laoticus (Thai giant scorpion).